A 403-amino-acid chain; its full sequence is MALRSYCRQLAAQVFRLKLCGNECPRNAPGCSFSLAGIKSLHEPTGVLARSSRCVKRWHRRSWHRCASLQMPSQKSHSDTTDFSRWTLAWGAVAFSLFGGSDEKTEEQKLEDELILLLKKAKYSMMIGELDAADGFLHRAVRLAHQMHNNDAIIYTYSLMANLAFVRGQLDNAEKLFKAAMSFMLSGGTPQDDNALIEMSLKLASIYATQNKNELAEHGFQFCTDSLEAKMDKQKDLPPESLSDEERKDTRLLLGLSLDARARYLAANHRFIGACRDYRHALQICQEEQGESHPQTLVLMSDLATVLDLRGKHDEALVYVKKAVELGQAAGHPEQHVLLGNMAGILMHNGEFEESAKLYQEALALAHTAGDAEAIEQLQEGLKELDNRRNAKDNSKVEDELKE.

The transit peptide at 1 to 67 directs the protein to the mitochondrion; sequence MALRSYCRQL…WHRRSWHRCA (67 aa). TPR repeat units lie at residues 154–187, 297–330, and 336–369; these read IYTY…MLSG, LVLM…GQAA, and HVLL…AHTA.

Belongs to the TTC19 family. As to quaternary structure, binds to the mature mitochondrial complex III dimer, after the incorporation of the Rieske protein (UQCRFS1). Interacts with UQCRC1 and UQCRFS1. Interacts with ZFYVE26 and CHMP4B.

The protein resides in the mitochondrion inner membrane. Functionally, required for the preservation of the structural and functional integrity of mitochondrial respiratory complex III by allowing the physiological turnover of the Rieske protein UQCRFS1. Involved in the clearance of UQCRFS1 N-terminal fragments, which are produced upon incorporation into the complex III and whose presence is detrimental for its catalytic activity. This chain is Tetratricopeptide repeat protein 19, mitochondrial (ttc19), found in Danio rerio (Zebrafish).